Here is a 449-residue protein sequence, read N- to C-terminus: Malonyl-CoA:anthocyanidin 5-O-glucoside-6''-O-malonyltransferase (449 aa).

Methionine 1 is modified (N-acetylmethionine). Active-site proton acceptor residues include histidine 162 and aspartate 394.

The protein belongs to the plant acyltransferase family. Expressed in flowers. Detected in leaves, stems, roots and siliques.

It catalyses the reaction anthocyanin A3 + malonyl-CoA = anthocyanin A5 + CoA. The catalysed reaction is anthocyanin A7 + malonyl-CoA = anthocyanin A9 + CoA. It carries out the reaction anthocyanin A6 + malonyl-CoA = anthocyanin A8 + CoA. The enzyme catalyses anthocyanin A10 + malonyl-CoA = anthocyanin A11 + CoA. Functionally, catalyzes the malonylation of the 5-O-glucose residue of anthocyanins, using malonyl-CoA as the malonyl donor. Acts only on anthocyanin substrates containing a 5-O-glucosyl moiety. Acts on the four native A.thaliana anthocyanins, A3, A7, and to a lesser extent, A6 and A10. Can also use the non-native anthocyanin compounds cyanin (cyanidin 3,5-diglucoside), malvin, pelargonidin 3,5-diglucoside, peonidin 3,5-diglucoside, cyanidin 3-coumaroylglucoside 5-glucoside, delphinidin 3-coumaroylrutinoside 5-glucoside and petunidin 3-coumaroylrutinoside 5-glucoside as substrates. Is the sole enzyme responsible for producing malonylated anthocyanin 5-O-glucosides in A.thaliana. Is not able to catalyze acyl transfer using acetyl-CoA, butyryl-CoA, hexanoyl-CoA, benzoyl-CoA, cinnamoyl-CoA, methylmalonyl-CoA, succinyl-CoA, p-coumaroyl-CoA or caffeoyl-CoA. In Arabidopsis thaliana (Mouse-ear cress), this protein is Malonyl-CoA:anthocyanidin 5-O-glucoside-6''-O-malonyltransferase (5MAT).